The chain runs to 380 residues: Cytochrome b (380 aa).

4 helical membrane-spanning segments follow: residues 33 to 53, 77 to 98, 113 to 133, and 178 to 198; these read FGSLLGLCLITQILTGLFLAM, WLIRNIHANGASFFFICLYLHV, WNIGVILLLLTMMTAFVGYVL, and FFAFHFLLPFVIAGASMIHLL. Heme b-binding residues include histidine 83 and histidine 97. Residues histidine 182 and histidine 196 each coordinate heme b. Histidine 201 is an a ubiquinone binding site. A run of 4 helical transmembrane segments spans residues 226 to 246, 288 to 308, 320 to 340, and 347 to 367; these read YKDLFGFTLMLVGLTSVALFS, LGGVLALLFSILVLMLVPMLH, LSQILFWALVADMLVLTWIGG, and FVLIGQVASTVYFALFLIALP.

Belongs to the cytochrome b family. As to quaternary structure, the cytochrome bc1 complex contains 3 respiratory subunits (MT-CYB, CYC1 and UQCRFS1), 2 core proteins (UQCRC1 and UQCRC2) and probably 6 low-molecular weight proteins. It depends on heme b as a cofactor.

It is found in the mitochondrion inner membrane. Component of the ubiquinol-cytochrome c reductase complex (complex III or cytochrome b-c1 complex) that is part of the mitochondrial respiratory chain. The b-c1 complex mediates electron transfer from ubiquinol to cytochrome c. Contributes to the generation of a proton gradient across the mitochondrial membrane that is then used for ATP synthesis. In Acipenser transmontanus (White sturgeon), this protein is Cytochrome b (mt-cyb).